The following is a 447-amino-acid chain: Zinc finger protein ZIC 1 (447 aa).

The segment at Leu225–His260 adopts a C2H2-type 1; atypical zinc-finger fold. The C2H2-type 2; atypical zinc finger occupies His269–His296. 3 consecutive C2H2-type zinc fingers follow at residues Phe302–His326, Phe332–His356, and Tyr362–His384. The tract at residues Ser375–His431 is disordered. Over residues Ser386–Ser427 the composition is skewed to low complexity.

This sequence belongs to the GLI C2H2-type zinc-finger protein family. As to quaternary structure, interacts (via the C2H2-type domains 3, 4 and 5) with MDFIC (via the C2H2-type domains 3, 4 and 5). Interacts with GLI1; the interaction enhances transcription activation. Interacts with GLI2. Interacts with GLI3; the interaction enhances transcription activation. CNS. A high level expression is seen in the cerebellum. Detected in the nuclei of the cerebellar granule cell lineage from the progenitor cells of the external germinal layer to the postmigrated cells of the internal granular layer. Detected in medulloblastoma (26/29 cases), but not present in all other tumors examined.

It localises to the nucleus. It is found in the cytoplasm. In terms of biological role, acts as a transcriptional activator. Involved in neurogenesis. Plays important roles in the early stage of organogenesis of the CNS, as well as during dorsal spinal cord development and maturation of the cerebellum. Involved in the spatial distribution of mossy fiber (MF) neurons within the pontine gray nucleus (PGN). Plays a role in the regulation of MF axon pathway choice. Promotes MF migration towards ipsilaterally-located cerebellar territories. May have a role in shear flow mechanotransduction in osteocytes. Retains nuclear GLI1 and GLI3 in the cytoplasm. Binds to the minimal GLI-consensus sequence 5'-TGGGTGGTC-3'. The protein is Zinc finger protein ZIC 1 (ZIC1) of Homo sapiens (Human).